The following is a 163-amino-acid chain: Endoribonuclease YbeY (163 aa).

Zn(2+) is bound by residues H129, H133, and H139.

The protein belongs to the endoribonuclease YbeY family. Requires Zn(2+) as cofactor.

It is found in the cytoplasm. Its function is as follows. Single strand-specific metallo-endoribonuclease involved in late-stage 70S ribosome quality control and in maturation of the 3' terminus of the 16S rRNA. The sequence is that of Endoribonuclease YbeY from Picosynechococcus sp. (strain ATCC 27264 / PCC 7002 / PR-6) (Agmenellum quadruplicatum).